The chain runs to 542 residues: MNTTGYDILRNPFLNKGTAFSEAERQQLGLTGTLPSQIQTIEEQAEQAYKQFQAKSPLLEKRIFLMNLFNENVTLFYHLMDQHVSEFMPIVYDPVVAESIEQYNEIYTNPQNAAFLSVDRPEDVENALKNAAAGRDIKLVVVTDAEGILGMGDWGVNGVDIAVGKLMVYTAAAGIDPATVLPVSIDAGTNNKELLHNPLYLGNKHERIAGEQYLEFIDKFVTAEQNLFPESLLHWEDFGRSNAQVILDKYKESIATFNDDIQGTGMIVLAGIFGALNISKQKLVDQKFVTFGAGTAGMGIVNQIFSELKQAGLSDDEARNHFYLVDKQGLLFDDTEGLTAAQKPFTRSRKEFVNPEQLINLETIVKELHPTVLIGTSTQPGTFTETIVKSMAENTERPIIFPLSNPTKLAEATAEDLIKWTGGKALVATGIPAADVDYKGVTYKIGQGNNALIYPGLGFGLVASTAKLLTQETISAAIHALGGLVDTDEPGAAVLPPVSNLTDFSQKIAEITAQSVVNQGLNREKIVDPKQAVQDAKWSAEY.

Y92 functions as the Proton donor in the catalytic mechanism. K165 functions as the Proton acceptor in the catalytic mechanism. Substrate is bound at residue K165. Mn(2+) is bound by residues E236, D237, and D260. NAD(+) is bound by residues 293-296, N405, and N450; that span reads AGTA. A substrate-binding site is contributed by N450.

The protein belongs to the malic enzymes family. Homodimer. It depends on Mn(2+) as a cofactor. Requires NAD(+) as cofactor.

It catalyses the reaction (S)-malate + H(+) = (S)-lactate + CO2. Its activity is regulated as follows. Oxamate, fructose-1,6-diphosphate and L-lactate act as non-competitive inhibitors, whereas succinate, citrate and tartrate isomers produce a competitive inhibition. Its function is as follows. Involved in the malolactic fermentation (MLF) of wine, which results in a natural decrease in acidity and favorable changes in wine flavors. Catalyzes the decarboxylation of L-malate to L-lactate. The polypeptide is Malolactic enzyme (mleS) (Leuconostoc mesenteroides).